The chain runs to 469 residues: 3-isopropylmalate dehydratase large subunit (469 aa).

Residues Cys347, Cys410, and Cys413 each coordinate [4Fe-4S] cluster.

It belongs to the aconitase/IPM isomerase family. LeuC type 1 subfamily. Heterodimer of LeuC and LeuD. [4Fe-4S] cluster is required as a cofactor.

The enzyme catalyses (2R,3S)-3-isopropylmalate = (2S)-2-isopropylmalate. It functions in the pathway amino-acid biosynthesis; L-leucine biosynthesis; L-leucine from 3-methyl-2-oxobutanoate: step 2/4. In terms of biological role, catalyzes the isomerization between 2-isopropylmalate and 3-isopropylmalate, via the formation of 2-isopropylmaleate. The chain is 3-isopropylmalate dehydratase large subunit from Polynucleobacter necessarius subsp. necessarius (strain STIR1).